The sequence spans 343 residues: N6-succino-2-amino-2'-deoxyadenylate synthase (343 aa).

Serine 14 serves as the catalytic Proton acceptor. ATP contacts are provided by serine 14, threonine 15, glycine 16, lysine 17, and glycine 18. Serine 14 is a dGMP binding site. Position 14 (serine 14) interacts with Mg(2+). Asparagine 40 contributes to the dGMP binding site. ATP contacts are provided by glycine 42, histidine 43, and threonine 44. Glycine 42 contacts Mg(2+). Residues serine 127, threonine 128, and arginine 142 each coordinate dGMP. Glutamine 187 is a binding site for ATP. Threonine 202 lines the dGMP pocket. Threonine 263 lines the Mg(2+) pocket. Residues threonine 263, valine 264, and arginine 269 each contribute to the L-aspartate site. Residues asparagine 294, asparagine 297, and glycine 330 each contribute to the ATP site.

It belongs to the Caudovirales PurZ family. Mg(2+) is required as a cofactor.

The enzyme catalyses dGMP + L-aspartate + ATP = (2S)-2-amino-2'-deoxyadenylo-succinate + ADP + phosphate + 2 H(+). The protein operates within purine metabolism. Functionally, involved in the synthesis of the atypical nucleotide dZTP (2-amino-2'-deoxyadenosine-5'-triphosphate). Catalyzes the condensation of aspartate with deoxyguanylate into dSMP (N6-succino-2-amino-2'-deoxyadenylate), which undergoes defumarylation and phosphorylation respectively by host PurB and guanylate/nucleoside diphosphate kinases to give dZTP. dZTP is integrated into the viral genome instead of adenine by the viral DNA polymerase. This Z-base probably completely replaces adenosine and forms a triple bond to the opposite T-base. The resulting non-standard viral DNA is called Z-genome. The chemically modified DNA is probably harder for the host bacteria to digest with nucleases or restriction enzymes. This chain is N6-succino-2-amino-2'-deoxyadenylate synthase, found in Vibrio phage phiVC8.